A 443-amino-acid chain; its full sequence is MFLAQEIIRKKRNGQALTAAEIQFFVNGITTNSVSEGQIAAFGMAVYFNDMNMDERIALTIGMRDSGTVLNWDSLGLNGPVIDKHSTGGVGDVISLMLGPMAAACGGYVPMISGRGLGHTGGTLDKFDAILGYQTEPSSELFRKVVKEAGVAIIGQTGDLVPADKRFYSIRDNTATVESISLITASILSKKLAAGLDALVMDVKVGSGAFMPSYAASEELARSIAAVANGAGTKTTALLTDMNQVLASCAGNAVEVVEAINFLTGEYRNPRLYEVTMGLCAEMLVLGGIAQNEIEARTKLNTVLDNGKAAEVFGKMIAGLGGPTDFIEAYDKYLPQAKIIRPVFSDAQGYAHSMDTRELGLAVVTLGGGRRKPGDKLDYSVGLTQVCALGEQISTDKPIAMIHAQTEDDFLEAELAVKNAIKIQSSMPEKMPEIYRYIRAADL.

The protein belongs to the thymidine/pyrimidine-nucleoside phosphorylase family. As to quaternary structure, homodimer.

It carries out the reaction thymidine + phosphate = 2-deoxy-alpha-D-ribose 1-phosphate + thymine. It functions in the pathway pyrimidine metabolism; dTMP biosynthesis via salvage pathway; dTMP from thymine: step 1/2. The enzymes which catalyze the reversible phosphorolysis of pyrimidine nucleosides are involved in the degradation of these compounds and in their utilization as carbon and energy sources, or in the rescue of pyrimidine bases for nucleotide synthesis. This Shewanella denitrificans (strain OS217 / ATCC BAA-1090 / DSM 15013) protein is Thymidine phosphorylase.